The primary structure comprises 475 residues: Ribulose bisphosphate carboxylase large chain (475 aa).

The propeptide occupies 1-2 (MS). At proline 3 the chain carries N-acetylproline. Position 14 is an N6,N6,N6-trimethyllysine (lysine 14). 2 residues coordinate substrate: asparagine 123 and threonine 173. Residue lysine 175 is the Proton acceptor of the active site. Position 177 (lysine 177) interacts with substrate. Mg(2+) contacts are provided by lysine 201, aspartate 203, and glutamate 204. Lysine 201 bears the N6-carboxylysine mark. Residue histidine 294 is the Proton acceptor of the active site. Substrate contacts are provided by arginine 295, histidine 327, and serine 379.

Belongs to the RuBisCO large chain family. Type I subfamily. In terms of assembly, heterohexadecamer of 8 large chains and 8 small chains; disulfide-linked. The disulfide link is formed within the large subunit homodimers. Requires Mg(2+) as cofactor. The disulfide bond which can form in the large chain dimeric partners within the hexadecamer appears to be associated with oxidative stress and protein turnover.

It is found in the plastid. The protein resides in the chloroplast. It catalyses the reaction 2 (2R)-3-phosphoglycerate + 2 H(+) = D-ribulose 1,5-bisphosphate + CO2 + H2O. The enzyme catalyses D-ribulose 1,5-bisphosphate + O2 = 2-phosphoglycolate + (2R)-3-phosphoglycerate + 2 H(+). Its function is as follows. RuBisCO catalyzes two reactions: the carboxylation of D-ribulose 1,5-bisphosphate, the primary event in carbon dioxide fixation, as well as the oxidative fragmentation of the pentose substrate in the photorespiration process. Both reactions occur simultaneously and in competition at the same active site. The sequence is that of Ribulose bisphosphate carboxylase large chain from Plumbago auriculata (Cape leadwort).